A 346-amino-acid chain; its full sequence is S-adenosylmethionine:tRNA ribosyltransferase-isomerase (346 aa).

It belongs to the QueA family. In terms of assembly, monomer.

The protein localises to the cytoplasm. The enzyme catalyses 7-aminomethyl-7-carbaguanosine(34) in tRNA + S-adenosyl-L-methionine = epoxyqueuosine(34) in tRNA + adenine + L-methionine + 2 H(+). It participates in tRNA modification; tRNA-queuosine biosynthesis. Its function is as follows. Transfers and isomerizes the ribose moiety from AdoMet to the 7-aminomethyl group of 7-deazaguanine (preQ1-tRNA) to give epoxyqueuosine (oQ-tRNA). In Nitrosomonas eutropha (strain DSM 101675 / C91 / Nm57), this protein is S-adenosylmethionine:tRNA ribosyltransferase-isomerase.